The sequence spans 78 residues: DNA-directed RNA polymerase subunit Rpo5 (78 aa).

It belongs to the archaeal Rpo5/eukaryotic RPB5 RNA polymerase subunit family. As to quaternary structure, part of the RNA polymerase complex.

The protein resides in the cytoplasm. The enzyme catalyses RNA(n) + a ribonucleoside 5'-triphosphate = RNA(n+1) + diphosphate. DNA-dependent RNA polymerase (RNAP) catalyzes the transcription of DNA into RNA using the four ribonucleoside triphosphates as substrates. In Methanothrix thermoacetophila (strain DSM 6194 / JCM 14653 / NBRC 101360 / PT) (Methanosaeta thermophila), this protein is DNA-directed RNA polymerase subunit Rpo5.